Reading from the N-terminus, the 71-residue chain is cAMP-dependent protein kinase inhibitor beta (71 aa).

Positions 1–21 are disordered; sequence MTDVESVISSFASSARAGRRN. Thr2 carries the blocked amino end (Thr) modification. Position 35 is a phosphoserine (Ser35). The segment at 51 to 71 is disordered; sequence AKMKNEEKDQGQPKKPLDEDK.

This sequence belongs to the PKI family. As to expression, testis.

Extremely potent competitive inhibitor of cAMP-dependent protein kinase activity, this protein interacts with the catalytic subunit of the enzyme after the cAMP-induced dissociation of its regulatory chains. This chain is cAMP-dependent protein kinase inhibitor beta (Pkib), found in Rattus norvegicus (Rat).